We begin with the raw amino-acid sequence, 303 residues long: Ornithine carbamoyltransferase (303 aa).

Carbamoyl phosphate-binding positions include 52 to 55 (STRT), Gln79, Arg103, and 130 to 133 (HPCQ). L-ornithine-binding positions include Asn161, Asp222, and 226–227 (SM). Carbamoyl phosphate-binding positions include 262–263 (CL) and Lys290.

This sequence belongs to the aspartate/ornithine carbamoyltransferase superfamily. OTCase family.

The protein localises to the cytoplasm. The enzyme catalyses carbamoyl phosphate + L-ornithine = L-citrulline + phosphate + H(+). It functions in the pathway amino-acid biosynthesis; L-arginine biosynthesis; L-arginine from L-ornithine and carbamoyl phosphate: step 1/3. Functionally, reversibly catalyzes the transfer of the carbamoyl group from carbamoyl phosphate (CP) to the N(epsilon) atom of ornithine (ORN) to produce L-citrulline. This Desulfotalea psychrophila (strain LSv54 / DSM 12343) protein is Ornithine carbamoyltransferase.